The chain runs to 300 residues: Bifunctional protein FolD (300 aa).

Residues Gly-168–Ser-170, Ser-193, and Ile-234 contribute to the NADP(+) site.

The protein belongs to the tetrahydrofolate dehydrogenase/cyclohydrolase family. As to quaternary structure, homodimer.

The catalysed reaction is (6R)-5,10-methylene-5,6,7,8-tetrahydrofolate + NADP(+) = (6R)-5,10-methenyltetrahydrofolate + NADPH. The enzyme catalyses (6R)-5,10-methenyltetrahydrofolate + H2O = (6R)-10-formyltetrahydrofolate + H(+). The protein operates within one-carbon metabolism; tetrahydrofolate interconversion. Functionally, catalyzes the oxidation of 5,10-methylenetetrahydrofolate to 5,10-methenyltetrahydrofolate and then the hydrolysis of 5,10-methenyltetrahydrofolate to 10-formyltetrahydrofolate. This Ehrlichia ruminantium (strain Gardel) protein is Bifunctional protein FolD.